A 168-amino-acid polypeptide reads, in one-letter code: Small ribosomal subunit protein uS9 (168 aa).

The span at 1–11 (MAQNEELTTEA) shows a compositional bias: low complexity. The tract at residues 1–36 (MAQNEELTTEAVEAEENPTSYTSESSAAEAAPKKER) is disordered.

Belongs to the universal ribosomal protein uS9 family.

In Pseudarthrobacter chlorophenolicus (strain ATCC 700700 / DSM 12829 / CIP 107037 / JCM 12360 / KCTC 9906 / NCIMB 13794 / A6) (Arthrobacter chlorophenolicus), this protein is Small ribosomal subunit protein uS9.